Here is a 324-residue protein sequence, read N- to C-terminus: ATP-dependent 6-phosphofructokinase (324 aa).

Glycine 15 contributes to the ATP binding site. Arginine 25 to arginine 29 serves as a coordination point for ADP. Residues arginine 76–phenylalanine 77 and glycine 106–serine 109 contribute to the ATP site. Aspartate 107 is a binding site for Mg(2+). Threonine 130–aspartate 132 lines the substrate pocket. The Proton acceptor role is filled by aspartate 132. Arginine 159 lines the ADP pocket. Substrate contacts are provided by residues arginine 167 and methionine 174–arginine 176. ADP contacts are provided by residues glycine 190–glutamate 192, lysine 216, and lysine 218–histidine 220. Substrate is bound by residues glutamate 227, arginine 248, and histidine 254 to arginine 257.

This sequence belongs to the phosphofructokinase type A (PFKA) family. ATP-dependent PFK group I subfamily. Prokaryotic clade 'B1' sub-subfamily. As to quaternary structure, homotetramer. Mg(2+) is required as a cofactor.

The protein resides in the cytoplasm. It catalyses the reaction beta-D-fructose 6-phosphate + ATP = beta-D-fructose 1,6-bisphosphate + ADP + H(+). Its pathway is carbohydrate degradation; glycolysis; D-glyceraldehyde 3-phosphate and glycerone phosphate from D-glucose: step 3/4. Its activity is regulated as follows. Allosterically activated by ADP and other diphosphonucleosides, and allosterically inhibited by phosphoenolpyruvate. Catalyzes the phosphorylation of D-fructose 6-phosphate to fructose 1,6-bisphosphate by ATP, the first committing step of glycolysis. The polypeptide is ATP-dependent 6-phosphofructokinase (Actinobacillus pleuropneumoniae serotype 5b (strain L20)).